Consider the following 417-residue polypeptide: Tyrosine aminotransferase (417 aa).

Residue Lys-249 is modified to N6-(pyridoxal phosphate)lysine.

Belongs to the class-I pyridoxal-phosphate-dependent aminotransferase family. Homodimer. Pyridoxal 5'-phosphate is required as a cofactor.

It carries out the reaction L-tyrosine + 2-oxoglutarate = 3-(4-hydroxyphenyl)pyruvate + L-glutamate. Its pathway is amino-acid degradation; L-phenylalanine degradation; acetoacetate and fumarate from L-phenylalanine: step 2/6. Transaminase involved in tyrosine breakdown. Converts tyrosine to p-hydroxyphenylpyruvate. Has much lower affinity and transaminase activity towards phenylalanine. The chain is Tyrosine aminotransferase (tat) from Dictyostelium discoideum (Social amoeba).